The sequence spans 492 residues: G protein-activated inward rectifier potassium channel 1 (492 aa).

Residues 1–72 (MSALRRKLGD…LFTTLVDLKW (72 aa)) lie on the Cytoplasmic side of the membrane. Residues 16-35 (STSASGGGLPPPRAAPRGKR) form a disordered region. The helical transmembrane segment at 73 to 97 (RWNLFIFVLTYTVAWLFMASMWWVI) threads the bilayer. Over 98 to 121 (AYMRGDLNKAHDDSYTPCVANVYN) the chain is Extracellular. The helical; Pore-forming intramembrane region spans 122–133 (FPSAFLFFIETE). The pore-forming intramembrane region spans 134-140 (ATIGYGY). The Selectivity filter signature appears at 135–140 (TIGYGY). Topologically, residues 141 to 149 (RYITDKCPE) are extracellular. A helical membrane pass occupies residues 150 to 171 (GIILFLFQSILGSIVDAFLIGC). Residues 172 to 492 (MFIKMSQPKK…LRKMNSDRFT (321 aa)) are Cytoplasmic-facing. The interval 174 to 201 (IKMSQPKKRAETLMFSEHAAISMRDGKL) is polyphosphoinositide (PIP2)-binding. Positions 452–492 (SDPMSQSVADLPPKLQKLSGGGRMEGNLPPKLRKMNSDRFT) are disordered.

The protein belongs to the inward rectifier-type potassium channel (TC 1.A.2.1) family. KCNJ3 subfamily. Associates with KCNJ5/GIRK4 or KCNJ6/GIRK2 or KCNJ9/GIRK3 to form a G-protein activated heteromultimer pore-forming unit. The resulting inward current is much larger.

The protein resides in the membrane. It carries out the reaction K(+)(in) = K(+)(out). With respect to regulation, heteromultimer composed of KCNJ3/GIRK1 and KCNJ5/GIRK4 is activated by phosphatidylinositol 4,5 biphosphate (PtdIns(4,5)P2). In terms of biological role, inward rectifier potassium channels are characterized by a greater tendency to allow potassium to flow into the cell rather than out of it. Their voltage dependence is regulated by the concentration of extracellular potassium; as external potassium is raised, the voltage range of the channel opening shifts to more positive voltages. The inward rectification is mainly due to the blockage of outward current by internal magnesium. This potassium channel is controlled by G proteins. This receptor plays a crucial role in regulating the heartbeat. This chain is G protein-activated inward rectifier potassium channel 1 (KCNJ3), found in Gallus gallus (Chicken).